The primary structure comprises 127 residues: Small integral membrane protein 33 (127 aa).

Residue Asn-15 is glycosylated (N-linked (GlcNAc...) asparagine). The helical transmembrane segment at 38–58 (PLLAAIIAAFVLLAICIVLAV) threads the bilayer.

Its subcellular location is the membrane. The chain is Small integral membrane protein 33 from Mus musculus (Mouse).